Here is a 285-residue protein sequence, read N- to C-terminus: Alginate lyase (285 aa).

The signal sequence occupies residues 1–20 (MIKSNLVISSLAIVSSMSYA).

This sequence belongs to the polysaccharide lyase 6 family.

The enzyme catalyses Eliminative cleavage of alginate to give oligosaccharides with 4-deoxy-alpha-L-erythro-hex-4-enuronosyl groups at their non-reducing ends and beta-D-mannuronate at their reducing end.. The polypeptide is Alginate lyase (alxM) (Photobacterium sp. (strain ATCC 43367)).